Here is a 199-residue protein sequence, read N- to C-terminus: GTP cyclohydrolase-2 (199 aa).

GTP is bound at residue 49-53 (RVHSE). Residues cysteine 54, cysteine 65, and cysteine 67 each coordinate Zn(2+). GTP-binding positions include glutamine 70, 92 to 94 (EGR), and threonine 114. Aspartate 126 functions as the Proton acceptor in the catalytic mechanism. The Nucleophile role is filled by arginine 128. The GTP site is built by threonine 149 and lysine 154.

Belongs to the GTP cyclohydrolase II family. Requires Zn(2+) as cofactor.

The catalysed reaction is GTP + 4 H2O = 2,5-diamino-6-hydroxy-4-(5-phosphoribosylamino)-pyrimidine + formate + 2 phosphate + 3 H(+). The protein operates within cofactor biosynthesis; riboflavin biosynthesis; 5-amino-6-(D-ribitylamino)uracil from GTP: step 1/4. Catalyzes the conversion of GTP to 2,5-diamino-6-ribosylamino-4(3H)-pyrimidinone 5'-phosphate (DARP), formate and pyrophosphate. In Baumannia cicadellinicola subsp. Homalodisca coagulata, this protein is GTP cyclohydrolase-2.